The following is a 204-amino-acid chain: Ras-related protein RABG1 (204 aa).

12–19 contributes to the GTP binding site; sequence GDSGVGKT. The Effector region motif lies at 34–42; the sequence is HNSTIYVDL. GTP contacts are provided by residues 60–64, 122–125, and 155–156; these read DTAGQ, NKTD, and SA. Residues cysteine 202 and cysteine 204 are each lipidated (S-geranylgeranyl cysteine). Cysteine methyl ester is present on cysteine 204.

It belongs to the small GTPase superfamily. Rab family.

The protein localises to the cell membrane. Its function is as follows. Intracellular vesicle trafficking and protein transport. In Arabidopsis thaliana (Mouse-ear cress), this protein is Ras-related protein RABG1 (RABG1).